The sequence spans 312 residues: Acetaldehyde dehydrogenase (312 aa).

NAD(+) is bound at residue 12–15; that stretch reads SGNV. The active-site Acyl-thioester intermediate is the cysteine 132. NAD(+)-binding positions include 163–171 and asparagine 290; that span reads SAGPGTRAN.

This sequence belongs to the acetaldehyde dehydrogenase family.

The catalysed reaction is acetaldehyde + NAD(+) + CoA = acetyl-CoA + NADH + H(+). In Pseudomonas putida (Arthrobacter siderocapsulatus), this protein is Acetaldehyde dehydrogenase (cbzQ).